We begin with the raw amino-acid sequence, 213 residues long: Thymidylate kinase (213 aa).

10–17 (GLEGAGKT) contributes to the ATP binding site.

The protein belongs to the thymidylate kinase family.

The catalysed reaction is dTMP + ATP = dTDP + ADP. Phosphorylation of dTMP to form dTDP in both de novo and salvage pathways of dTTP synthesis. The sequence is that of Thymidylate kinase from Salmonella choleraesuis (strain SC-B67).